A 580-amino-acid chain; its full sequence is Arrestin domain-containing protein A (580 aa).

Asparagine 27, asparagine 33, and asparagine 60 each carry an N-linked (GlcNAc...) asparagine glycan. A disordered region spans residues 31–54 (NVNTTSSHHHHHSNSGNAEVSFNG). Disordered stretches follow at residues 67–86 (ETHS…EISI) and 95–114 (MTMS…HKES). Residues 118 to 138 (NLSLGGIVGAVVGAVTGGVMI) form a helical membrane-spanning segment. Residues asparagine 149, asparagine 341, and asparagine 342 are each glycosylated (N-linked (GlcNAc...) asparagine). The segment at 468-528 (DEHATACRKC…VCEECYPIAT (61 aa)) adopts an FYVE-type zinc-finger fold. Cysteine 474, cysteine 477, cysteine 490, cysteine 493, cysteine 498, cysteine 501, cysteine 520, and cysteine 523 together coordinate Zn(2+).

Belongs to the arrestin family.

The protein localises to the membrane. This is Arrestin domain-containing protein A (adcA) from Dictyostelium discoideum (Social amoeba).